We begin with the raw amino-acid sequence, 403 residues long: 3-(3-hydroxy-phenyl)propionate transporter (403 aa).

Over 1–16 (MSTRTPSSSSSRLMLT) the chain is Cytoplasmic. The helical transmembrane segment at 17-37 (IGLCFLVALMEGLDLQAAGIA) threads the bilayer. Over 38–53 (AGGIAQAFALDKMQMG) the chain is Periplasmic. A helical transmembrane segment spans residues 54–74 (WIFSAGILGLLPGALVGGMLA). Residues 75–81 (DRYGRKR) lie on the Cytoplasmic side of the membrane. A helical transmembrane segment spans residues 82-102 (ILIGSVALFGLFSLATAIAWD). Residues 103-105 (FPS) lie on the Periplasmic side of the membrane. Residues 106–126 (LVFARLMTGVGLGAALPNLIA) form a helical membrane-spanning segment. At 127-142 (LTSEAAGPRFRGTAVS) the chain is on the cytoplasmic side. Residues 143–163 (LMYCGVPIGAALAATLGFAGA) traverse the membrane as a helical segment. N164 is a topological domain (periplasmic). A helical membrane pass occupies residues 165–185 (LAWQTVFWVGGVVPLILVPLL). Residues 186-217 (MRWLPESAVFAGEKQSAPPLRALFAPETATAT) are Cytoplasmic-facing. The helical transmembrane segment at 218–238 (LLLWLCYFFTLLVVYMLINWL) threads the bilayer. Residues 239–253 (PLLLVEQGFQPSQAA) lie on the Periplasmic side of the membrane. A helical transmembrane segment spans residues 254 to 274 (GVMFALQMGAASGTLMLGALM). At 275–279 (DKLRP) the chain is on the cytoplasmic side. A helical membrane pass occupies residues 280–300 (VTMSLLIYSGMLASLLALGTV). At 301–306 (SSFNGM) the chain is on the periplasmic side. The helical transmembrane segment at 307–327 (LLAGFVAGLFATGGQSVLYAL) threads the bilayer. The Cytoplasmic portion of the chain corresponds to 328 to 339 (APLFYSSQIRAT). The chain crosses the membrane as a helical span at residues 340 to 360 (GVGTAVAVGRLGAMSGPLLAG). The Periplasmic segment spans residues 361-369 (KMLALGTGT). The helical transmembrane segment at 370–390 (VGVMAASAPGILVAGLAVFIL) threads the bilayer. The Cytoplasmic portion of the chain corresponds to 391–403 (MSRRSRIQPCADA).

This sequence belongs to the major facilitator superfamily. Aromatic acid:H(+) symporter (AAHS) (TC 2.A.1.15) family.

It localises to the cell inner membrane. The enzyme catalyses 3-(3-hydroxyphenyl)propanoate(in) + H(+)(in) = 3-(3-hydroxyphenyl)propanoate(out) + H(+)(out). With respect to regulation, inhibited by carbonyl cyanide m-chlorophenylhydrazone (CCCP), which dissipates the proton motive force. Uptake of 3-(3-hydroxyphenyl)propionate (3HPP) across the cytoplasmic membrane. Transport is driven by the proton motive force. Does not transport benzoate, 3-hydroxybenzoate or gentisate. The sequence is that of 3-(3-hydroxy-phenyl)propionate transporter from Escherichia coli (strain K12).